The following is a 712-amino-acid chain: Semaphorin-1A (712 aa).

The signal sequence occupies residues 1-20; it reads MVVKILVWSICLIALCHAWM. The Sema domain maps to 21–483; it reads PDSSSKLINH…GKDEIRLANL (463 aa). The Extracellular segment spans residues 21–601; the sequence is PDSSSKLINH…IGGCAVRQQL (581 aa). N-linked (GlcNAc...) asparagine glycans are attached at residues N42 and N69. Disulfide bonds link C95–C105 and C123–C132. 2 N-linked (GlcNAc...) asparagine glycosylation sites follow: N161 and N265. 4 disulfides stabilise this stretch: C242–C357, C266–C316, C486–C503, and C495–C512. Residues 602–622 traverse the membrane as a helical segment; the sequence is VIYTAGTLHIVVVVVSIVGLF. Over 623–712 the chain is Cytoplasmic; that stretch reads SWLYSGLSVF…TLQKIKKTYI (90 aa).

It belongs to the semaphorin family.

It localises to the membrane. Its function is as follows. Plays a role in growth cones guidance. The chain is Semaphorin-1A (SEMA-1A) from Tribolium confusum (Confused flour beetle).